Reading from the N-terminus, the 257-residue chain is Small ribosomal subunit protein uS2 (257 aa).

The protein belongs to the universal ribosomal protein uS2 family.

This is Small ribosomal subunit protein uS2 from Trichlorobacter lovleyi (strain ATCC BAA-1151 / DSM 17278 / SZ) (Geobacter lovleyi).